Consider the following 305-residue polypeptide: Translation initiation factor eIF2B subunit alpha (305 aa).

Lys35 carries the post-translational modification N6-acetyllysine.

Belongs to the eIF-2B alpha/beta/delta subunits family. In terms of assembly, component of the translation initiation factor 2B (eIF2B) complex which is a heterodecamer of two sets of five different subunits: alpha, beta, gamma, delta and epsilon. Subunits alpha, beta and delta comprise a regulatory subcomplex and subunits epsilon and gamma comprise a catalytic subcomplex. Within the complex, the hexameric regulatory complex resides at the center, with the two heterodimeric catalytic subcomplexes bound on opposite sides.

It is found in the cytoplasm. It localises to the cytosol. Its activity is regulated as follows. Activated by the chemical integrated stress response (ISR) inhibitor ISRIB which stimulates guanine nucleotide exchange factor activity for both phosphorylated and unphosphorylated eIF2. Its function is as follows. Acts as a component of the translation initiation factor 2B (eIF2B) complex, which catalyzes the exchange of GDP for GTP on eukaryotic initiation factor 2 (eIF2) gamma subunit. Its guanine nucleotide exchange factor activity is repressed when bound to eIF2 complex phosphorylated on the alpha subunit, thereby limiting the amount of methionyl-initiator methionine tRNA available to the ribosome and consequently global translation is repressed. The chain is Translation initiation factor eIF2B subunit alpha (EIF2B1) from Macaca fascicularis (Crab-eating macaque).